Consider the following 200-residue polypeptide: Small ribosomal subunit protein uS4 (200 aa).

Residues 22–41 (TGKELQKRPYAPGQHGPNQR) form a disordered region. Positions 92 to 152 (SRLDNLVYRM…EKSRNLQVIK (61 aa)) constitute an S4 RNA-binding domain.

The protein belongs to the universal ribosomal protein uS4 family. As to quaternary structure, part of the 30S ribosomal subunit. Contacts protein S5. The interaction surface between S4 and S5 is involved in control of translational fidelity.

Functionally, one of the primary rRNA binding proteins, it binds directly to 16S rRNA where it nucleates assembly of the body of the 30S subunit. In terms of biological role, with S5 and S12 plays an important role in translational accuracy. This is Small ribosomal subunit protein uS4 from Halalkalibacterium halodurans (strain ATCC BAA-125 / DSM 18197 / FERM 7344 / JCM 9153 / C-125) (Bacillus halodurans).